An 85-amino-acid chain; its full sequence is Growth factor (85 aa).

Residues 1–19 form the signal peptide; the sequence is MVPRDLVATLLCAMCIVQA. The region spanning 33 to 77 is the EGF-like domain; that stretch reads RIKLCNDDYKNYCLNNGTCFTVALNNVSLNPFCACHINYVGSRCQ. Disulfide bonds link Cys37–Cys51, Cys45–Cys65, and Cys67–Cys76. Residues Asn48 and Asn58 are each glycosylated (N-linked (GlcNAc...) asparagine; by host).

It is found in the secreted. Stimulates the growth of some tissues. The sequence is that of Growth factor (MGF) from Oryctolagus cuniculus (Rabbit).